The chain runs to 315 residues: 3-oxoacyl-[acyl-carrier-protein] reductase 3, chloroplastic (315 aa).

The transit peptide at 1 to 55 (MATTVAATKLTSLKAVKKLGFREIRQVRQWTPLQSSMPHFGSRQSFATSTVVKAQ) directs the protein to the chloroplast. NADP(+) is bound at residue 77–101 (VTGASRGIGKAIALSLGKAGCKVLV). S209 serves as a coordination point for substrate. Y222 functions as the Proton acceptor in the catalytic mechanism.

This sequence belongs to the short-chain dehydrogenases/reductases (SDR) family. As to quaternary structure, homotetramer.

The protein localises to the plastid. The protein resides in the chloroplast. The enzyme catalyses a (3R)-hydroxyacyl-[ACP] + NADP(+) = a 3-oxoacyl-[ACP] + NADPH + H(+). It participates in lipid metabolism; fatty acid biosynthesis. In Brassica napus (Rape), this protein is 3-oxoacyl-[acyl-carrier-protein] reductase 3, chloroplastic (bkr3).